Here is a 369-residue protein sequence, read N- to C-terminus: Aminomethyltransferase (369 aa).

The protein belongs to the GcvT family. The glycine cleavage system is composed of four proteins: P, T, L and H.

It carries out the reaction N(6)-[(R)-S(8)-aminomethyldihydrolipoyl]-L-lysyl-[protein] + (6S)-5,6,7,8-tetrahydrofolate = N(6)-[(R)-dihydrolipoyl]-L-lysyl-[protein] + (6R)-5,10-methylene-5,6,7,8-tetrahydrofolate + NH4(+). Functionally, the glycine cleavage system catalyzes the degradation of glycine. This Synechococcus sp. (strain CC9311) protein is Aminomethyltransferase.